The primary structure comprises 342 residues: Isopentenyl-diphosphate delta-isomerase (342 aa).

Arginine 11–lysine 12 is a binding site for substrate. FMN-binding positions include serine 68, serine 69 to threonine 71, serine 99, and asparagine 127. Position 99 to 101 (serine 99 to arginine 101) interacts with substrate. Glutamine 162 serves as a coordination point for substrate. Glutamate 163 provides a ligand contact to Mg(2+). Residues lysine 194, threonine 224, glycine 274–lysine 276, and alanine 295–glycine 296 contribute to the FMN site.

The protein belongs to the IPP isomerase type 2 family. Homooctamer. Dimer of tetramers. FMN serves as cofactor. Requires NADPH as cofactor. It depends on Mg(2+) as a cofactor.

The protein localises to the cytoplasm. It catalyses the reaction isopentenyl diphosphate = dimethylallyl diphosphate. Involved in the biosynthesis of isoprenoids. Catalyzes the 1,3-allylic rearrangement of the homoallylic substrate isopentenyl (IPP) to its allylic isomer, dimethylallyl diphosphate (DMAPP). This is Isopentenyl-diphosphate delta-isomerase from Rickettsia peacockii (strain Rustic).